The sequence spans 227 residues: DIELKLSTRPEKRVGSDELWDRAESALASALDSAGQPYDLQPGEGAFYGPKIEFSLKDCLGRVWQCGTLQLDFNLPIRLSAEYVSEDNSRKNPVMLHRAILGSFERFIGILIEHYEGAFPAWLAPTQAVIMNITDKQADFALEVEKTLAESGFRAKSDLRNEKIGFKIREHTLLKVPYLLVIGDREVEMQTVAVRTREGADLGSMPVAQFAEFLAQAVSRRGRQDTE.

The interval 1–120 is catalytic; it reads DIELKLSTRP…LIEHYEGAFP (120 aa).

Belongs to the class-II aminoacyl-tRNA synthetase family. As to quaternary structure, homodimer.

Its subcellular location is the cytoplasm. The catalysed reaction is tRNA(Thr) + L-threonine + ATP = L-threonyl-tRNA(Thr) + AMP + diphosphate + H(+). Its function is as follows. Catalyzes the attachment of threonine to tRNA(Thr) in a two-step reaction: L-threonine is first activated by ATP to form Thr-AMP and then transferred to the acceptor end of tRNA(Thr). Also edits incorrectly charged L-seryl-tRNA(Thr). The protein is Threonine--tRNA ligase of Pseudomonas syringae pv. syringae.